Here is a 120-residue protein sequence, read N- to C-terminus: Immunoglobulin lambda variable 2-14 (120 aa).

Positions M1–A19 are cleaved as a signal peptide. The residue at position 20 (Q20) is a Pyrrolidone carboxylic acid. Residues Q20–T44 are framework-1. The Ig-like domain maps to Q20–H119. A disulfide bridge links C41 with C109. The complementarity-determining-1 stretch occupies residues S45 to Y53. The framework-2 stretch occupies residues V54–Y70. Residues E71–S73 form a complementarity-determining-2 region. Positions N74 to C109 are framework-3. The tract at residues S110–H119 is complementarity-determining-3.

In terms of assembly, immunoglobulins are composed of two identical heavy chains and two identical light chains; disulfide-linked.

The protein localises to the secreted. The protein resides in the cell membrane. In terms of biological role, v region of the variable domain of immunoglobulin light chains that participates in the antigen recognition. Immunoglobulins, also known as antibodies, are membrane-bound or secreted glycoproteins produced by B lymphocytes. In the recognition phase of humoral immunity, the membrane-bound immunoglobulins serve as receptors which, upon binding of a specific antigen, trigger the clonal expansion and differentiation of B lymphocytes into immunoglobulins-secreting plasma cells. Secreted immunoglobulins mediate the effector phase of humoral immunity, which results in the elimination of bound antigens. The antigen binding site is formed by the variable domain of one heavy chain, together with that of its associated light chain. Thus, each immunoglobulin has two antigen binding sites with remarkable affinity for a particular antigen. The variable domains are assembled by a process called V-(D)-J rearrangement and can then be subjected to somatic hypermutations which, after exposure to antigen and selection, allow affinity maturation for a particular antigen. The chain is Immunoglobulin lambda variable 2-14 from Homo sapiens (Human).